The primary structure comprises 203 residues: MKLLHVDGSILGPHSVSRTVSAAIVDRLRAQHPGLDVIYRDLAGTPLPHLSGAVLAGAQPNATNTPDVQHDVELGRQVLEEFLAAEIVVIGAPLYNFTLSSQLKAWIDRILVAGVTFRYGPSGAEGLAGGKRVIAVVSRGGLYGPGTPAAAAEHAETYLRTVLAFIGITAPEVIVAEGIALGPEARERALAGALDAAAALKAA.

Residues Ser-9, 15-17 (SVS), and 138-141 (SRGG) contribute to the FMN site.

It belongs to the azoreductase type 1 family. As to quaternary structure, homodimer. Requires FMN as cofactor.

The catalysed reaction is 2 a quinone + NADH + H(+) = 2 a 1,4-benzosemiquinone + NAD(+). It catalyses the reaction N,N-dimethyl-1,4-phenylenediamine + anthranilate + 2 NAD(+) = 2-(4-dimethylaminophenyl)diazenylbenzoate + 2 NADH + 2 H(+). Functionally, quinone reductase that provides resistance to thiol-specific stress caused by electrophilic quinones. Also exhibits azoreductase activity. Catalyzes the reductive cleavage of the azo bond in aromatic azo compounds to the corresponding amines. The sequence is that of FMN-dependent NADH:quinone oxidoreductase from Methylorubrum extorquens (strain PA1) (Methylobacterium extorquens).